The sequence spans 502 residues: Neuronal acetylcholine receptor subunit alpha-7 (502 aa).

The N-terminal stretch at 1–22 (MCGGRGGIWLALAAALLHVSLQ) is a signal peptide. The Extracellular portion of the chain corresponds to 23-233 (GEFQRRLYKE…VTMRRRTLYY (211 aa)). Ca(2+) is bound by residues arginine 42 and valine 44. Asparagine 46, asparagine 90, and asparagine 133 each carry an N-linked (GlcNAc...) asparagine glycan. An intrachain disulfide couples cysteine 150 to cysteine 164. Residues serine 172 and tyrosine 210 each coordinate Ca(2+). A disulfide bridge links cysteine 212 with cysteine 213. Helical transmembrane passes span 234–254 (GLNL…VFLL), 262–282 (ISLG…VAEI), and 295–315 (QYFA…VIVL). Positions 260-267 (EKISLGIT) are essential for TMEM35A/NACHO-mediated proper subunit assembly and trafficking to cell membrane. Over 316–469 (RYHHHDPDGG…WKFAACVVDR (154 aa)) the chain is Cytoplasmic. The chain crosses the membrane as a helical span at residues 470 to 490 (LCLMAFSVFTIICTIGILMSA).

The protein belongs to the ligand-gated ion channel (TC 1.A.9) family. Acetylcholine receptor (TC 1.A.9.1) subfamily. Alpha-7/CHRNA7 sub-subfamily. In terms of assembly, homopentamer. Can also form heteropentamers with CHRNB2, mainly found in basal forebrain cholinergic neurons. Interacts with RIC3; which is required for proper folding and assembly. Interacts with LYPD6. Interacts with CANX. In terms of processing, glycosylations at Asn-46, Asn-90 and Asn-133 are essential for TMEM35A/NACHO-mediated proper subunit assembly and trafficking to the cell membrane. In terms of tissue distribution, expressed in neurons. Expressed in umbrella cells of urothelium (at protein level).

It is found in the postsynaptic cell membrane. The protein resides in the cell membrane. The catalysed reaction is Ca(2+)(in) = Ca(2+)(out). It carries out the reaction K(+)(in) = K(+)(out). It catalyses the reaction Na(+)(in) = Na(+)(out). The enzyme catalyses choline(out) = choline(in). The catalysed reaction is NH4(+)(in) = NH4(+)(out). It carries out the reaction L-arginine(in) = L-arginine(out). It catalyses the reaction guanidine(out) = guanidine(in). Its activity is regulated as follows. Activated by a myriad of ligands such as acetylcholine, cytisine, nicotine, choline and epibatidine. Oligomeric amyloid-beta protein 42 activates specifially CHRNA7:CHRNB2 nAchRs. Activity is modulated by positive allosteric modulators (PAMs), such as flavonoids, with a wide range of chemical diversity, pharmacological sensitivity and efficacy. AChR activity is inhibited by the antagonists alpha-conotoxons RgIA, ImI and ImII, small disulfide-constrained peptides from cone snails. Alpha-conotoxin PnIC selectively inhibits CHRNA7:CHRNB2 over CHRNA7 homopentamer. Component of neuronal acetylcholine receptors (nAChRs) that function as pentameric, ligand-gated cation channels with high calcium permeability among other activities. nAChRs are excitatory neurotrasnmitter receptors formed by a collection of nAChR subunits known to mediate synaptic transmission in the nervous system and the neuromuscular junction. Each nAchR subunit confers differential attributes to channel properties, including activation, deactivation and desensitization kinetics, pH sensitivity, cation permeability, and binding to allosteric modulators. CHRNA7 forms homopentameric neuronal acetylcholine receptors abundantly expressed in the central nervous system, characterized by fast desensitization and high calcium permeability. Also forms heteropentamers with CHRNB2, mainly expressed in basal forebrain cholinergic neurons. Involved in the modulation of calcium-dependent signaling pathways and influences the release of neurotransmitters, including dopamine, glutamate and GABA. Also expressed in non-neuronal cells such as immune cells like lymphocytes, monocytes and macrophages. In T cells, activation induces metabotropic signaling that results in an increase of intracellular Ca2+ concentrations, independent of ionotropic receptor functions. In macrophages, required for acetylcholine-mediated inhibition of TNF and other inflammatory cytokine release. Once activated by acetylcholine, nicotine or other agonists, selectively inhibits production of pro-inflammatory cytokines while leaving anti-inflammatory cytokines undisturbed. Stimulates the cholinergic anti-inflammatory pathway, controlling inflammation by inhibiting NFKB nuclear translocation and activating the JAK2-STAT3 pathway, independently of ion channel activity. Also expressed in the urothelium where it modulates reflex bladder activity by increasing intracellular calcium through internal stores and decreasing basal ATP release. The protein is Neuronal acetylcholine receptor subunit alpha-7 (Chrna7) of Rattus norvegicus (Rat).